A 148-amino-acid polypeptide reads, in one-letter code: Deoxyuridine 5'-triphosphate nucleotidohydrolase (148 aa).

Residues 67–69, Asn80, 84–86, and Met94 contribute to the substrate site; these read RSG and LID.

This sequence belongs to the dUTPase family. The cofactor is Mg(2+).

The enzyme catalyses dUTP + H2O = dUMP + diphosphate + H(+). It participates in pyrimidine metabolism; dUMP biosynthesis; dUMP from dCTP (dUTP route): step 2/2. Functionally, this enzyme is involved in nucleotide metabolism: it produces dUMP, the immediate precursor of thymidine nucleotides and it decreases the intracellular concentration of dUTP so that uracil cannot be incorporated into DNA. The polypeptide is Deoxyuridine 5'-triphosphate nucleotidohydrolase (Paraburkholderia phymatum (strain DSM 17167 / CIP 108236 / LMG 21445 / STM815) (Burkholderia phymatum)).